We begin with the raw amino-acid sequence, 187 residues long: UPF0301 protein GOX1459 (187 aa).

Belongs to the UPF0301 (AlgH) family.

The chain is UPF0301 protein GOX1459 from Gluconobacter oxydans (strain 621H) (Gluconobacter suboxydans).